We begin with the raw amino-acid sequence, 786 residues long: Protein translocase subunit SecA 1 (786 aa).

ATP-binding positions include Q85, 103 to 107 (GEGKT), and D491.

The protein belongs to the SecA family. In terms of assembly, monomer and homodimer. Part of the essential Sec protein translocation apparatus which comprises SecA, SecYEG and auxiliary proteins SecDF. Other proteins may also be involved.

The protein resides in the cell membrane. The protein localises to the cytoplasm. The enzyme catalyses ATP + H2O + cellular proteinSide 1 = ADP + phosphate + cellular proteinSide 2.. Functionally, part of the Sec protein translocase complex. Interacts with the SecYEG preprotein conducting channel. Has a central role in coupling the hydrolysis of ATP to the transfer of proteins into and across the cell membrane, serving as an ATP-driven molecular motor driving the stepwise translocation of polypeptide chains across the membrane. The polypeptide is Protein translocase subunit SecA 1 (Pediococcus pentosaceus (strain ATCC 25745 / CCUG 21536 / LMG 10740 / 183-1w)).